Consider the following 80-residue polypeptide: Lantibiotic Flvalpha.b (80 aa).

Residues 1 to 38 (MNKNPIYRSEEEAKNIACGNVAAELDENSQALDAINGA) constitute a propeptide, cleaved by FlvT. Residues Thr-43 and Thr-47 each carry the 2,3-didehydrobutyrine; by FlvM1 modification. The segment at residues 52–55 (TVGC) is a cross-link (beta-methyllanthionine (Thr-Cys); by FlvM1). Residues 58–68 (SYGLGNGGYCC) constitute a cross-link (lanthionine (Ser-Cys); by FlvM1). 2 consecutive cross-links (beta-methyllanthionine (Thr-Cys); by FlvM1) follow at residues 69 to 74 (TYTVEC) and 71 to 78 (TVECSKTC).

Post-translationally, the lanthionine formed by Ser-58 and Cys-68 forms a putative lipid II binding motif. Maturation of FlvA1 peptides involves the enzymatic conversion of Thr, and Ser into dehydrated AA and the formation of thioether bonds with cysteines. Modifications are processed by the flavecin synthetase FlvM1. This is followed by membrane translocation and cleavage of the modified precursor. In terms of processing, contains DL-lanthionine and DL-beta-methyllanthionine, when coepressed in E.coli with the flavecin synthetase FlvM1.

The protein resides in the secreted. Lanthionine-containing peptide antibiotic (lantibiotic) only active on Gram-positive bacteria in synergy with Flvbeta peptides, which are encoded by the same operon than Flvalpha.a. Shows antibacterial activity in synergy with Flvbeta.b, Flvbeta.c, Flvbeta.e and Flvbeta.g. Does not show antibacterial activity when tested with Flvbeta.a, Flvbeta.d, Flvbeta.f and Flvbeta.h. The bactericidal activity of lantibiotics is based on depolarization of energized bacterial cytoplasmic membranes, initiated by the formation of aqueous transmembrane pores. This is Lantibiotic Flvalpha.b from Ruminococcus flavefaciens.